The sequence spans 284 residues: Shikimate dehydrogenase (NADP(+)) (284 aa).

Shikimate is bound by residues 20–22 and Ser67; that span reads SIS. The active-site Proton acceptor is the Lys71. Asn92 and Asp107 together coordinate shikimate. Residues 129 to 133 and Val227 contribute to the NADP(+) site; that span reads GAGGA. Position 229 (Tyr229) interacts with shikimate. An NADP(+)-binding site is contributed by Gly250.

The protein belongs to the shikimate dehydrogenase family. In terms of assembly, homodimer.

It catalyses the reaction shikimate + NADP(+) = 3-dehydroshikimate + NADPH + H(+). The protein operates within metabolic intermediate biosynthesis; chorismate biosynthesis; chorismate from D-erythrose 4-phosphate and phosphoenolpyruvate: step 4/7. Involved in the biosynthesis of the chorismate, which leads to the biosynthesis of aromatic amino acids. Catalyzes the reversible NADPH linked reduction of 3-dehydroshikimate (DHSA) to yield shikimate (SA). The polypeptide is Shikimate dehydrogenase (NADP(+)) (Streptococcus sanguinis (strain SK36)).